Here is a 91-residue protein sequence, read N- to C-terminus: Large ribosomal subunit protein bL27 (91 aa).

Belongs to the bacterial ribosomal protein bL27 family.

In Chromobacterium violaceum (strain ATCC 12472 / DSM 30191 / JCM 1249 / CCUG 213 / NBRC 12614 / NCIMB 9131 / NCTC 9757 / MK), this protein is Large ribosomal subunit protein bL27.